Consider the following 1024-residue polypeptide: Beta-galactosidase (1024 aa).

Substrate is bound by residues N103 and D202. Residue D202 coordinates Na(+). Residues E417, H419, and E462 each contribute to the Mg(2+) site. Substrate-binding positions include E462 and 538 to 541; that span reads EYAH. The active-site Proton donor is the E462. E538 functions as the Nucleophile in the catalytic mechanism. Mg(2+) is bound at residue N598. Na(+) is bound by residues F602 and N605. Substrate contacts are provided by N605 and W1000.

It belongs to the glycosyl hydrolase 2 family. In terms of assembly, homotetramer. Mg(2+) serves as cofactor. Requires Na(+) as cofactor.

It carries out the reaction Hydrolysis of terminal non-reducing beta-D-galactose residues in beta-D-galactosides.. The protein is Beta-galactosidase of Escherichia coli (strain SMS-3-5 / SECEC).